We begin with the raw amino-acid sequence, 305 residues long: Phosphatidylinositol:ceramide inositolphosphotransferase 2 (305 aa).

Transmembrane regions (helical) follow at residues 34 to 54 (LLAG…VHYI), 81 to 101 (ETVF…PFIL), 105 to 125 (KIYT…CQFL), 168 to 188 (VMYG…LVFV), 198 to 218 (RFIK…IIAS), and 221 to 241 (HYSV…FCLD). Residue H180 is part of the active site. Residues H221 and D225 contribute to the active site.

The protein belongs to the sphingomyelin synthase family. In terms of tissue distribution, expressed in leaves, roots, stems, flowers and siliques.

It is found in the golgi apparatus. The protein localises to the trans-Golgi network membrane. The catalysed reaction is an N-(2R-hydroxy-very-long-chain fatty acyl)-(R)-4-hydroxysphingoid base + a 1,2-diacyl-sn-glycero-3-phospho-(1D-myo-inositol) = a 1D-myo-inositol-1-phospho-N-[(R)-2-hydroxy-very-long-chain fatty acyl]-(R)-4-hydroxysphingoid base + a 1,2-diacyl-sn-glycerol. It functions in the pathway sphingolipid metabolism. Functionally, catalyzes the transfer of the phosphorylinositol group from phosphatidylinositol (PI) to phytoceramide, an essential step in sphingolipid biosynthesis. May play an important role in modulating plant programmed cell death (PCD) associated with defense (e.g. toward Golovinomyces cichoracearum) by promoting sphingolipid metabolism and thus regulating ceramide accumulation. This chain is Phosphatidylinositol:ceramide inositolphosphotransferase 2, found in Arabidopsis thaliana (Mouse-ear cress).